Consider the following 184-residue polypeptide: Ras protein let-60 (184 aa).

10 to 17 (GDGGVGKS) contacts GTP. An Effector region motif is present at residues 32 to 40 (YDPTIEDSY). Residues 57 to 61 (DTAGQ) and 116 to 119 (NKCD) contribute to the GTP site. Cysteine methyl ester is present on Cys181. Cys181 carries the S-farnesyl cysteine lipid modification. Positions 182 to 184 (QIM) are cleaved as a propeptide — removed in mature form.

Belongs to the small GTPase superfamily. Ras family. As to quaternary structure, interacts with soc-2. Interacts (in GTP-bound form) with plc-1 (via Ras-associating domain 1). In terms of tissue distribution, expressed in body wall muscles and in the nervous system including ganglion, nerve ring dorsal and ventral nerve cords, motor neurons and sensory tail neurons.

It is found in the cell membrane. The catalysed reaction is GTP + H2O = GDP + phosphate + H(+). In terms of biological role, GTP-binding protein with GTPase activity. The level of let-60 controls the switch between vulval and hypodermal cell fates during C.elegans vulval induction. May stimulate the guanine nucleotide exchange factor (GEF) activity of rap-1. May induce nuclear condensation. This chain is Ras protein let-60, found in Caenorhabditis elegans.